We begin with the raw amino-acid sequence, 193 residues long: Ion-translocating oxidoreductase complex subunit A (193 aa).

A run of 6 helical transmembrane segments spans residues 5 to 25 (LLILVSTILVNNFVLVQFLGL), 38 to 58 (AMGMSLATTFVLTLSSLCSYL), 65 to 85 (APLGMEFLKTITFILVIAVVV), 102 to 122 (VLGIFLPLITTNCAVLGVALL), 134 to 154 (ILYGFGAAVGFSLVLTLFSAM), and 171 to 191 (AIGMITAGLMSLAFLGFTGLV).

It belongs to the NqrDE/RnfAE family. As to quaternary structure, the complex is composed of six subunits: RnfA, RnfB, RnfC, RnfD, RnfE and RnfG.

Its subcellular location is the cell inner membrane. In terms of biological role, part of a membrane-bound complex that couples electron transfer with translocation of ions across the membrane. The protein is Ion-translocating oxidoreductase complex subunit A of Hahella chejuensis (strain KCTC 2396).